The chain runs to 394 residues: Putative transporter AraJ (394 aa).

Over 1 to 4 (MKKV) the chain is Cytoplasmic. Residues 5 to 27 (ILSLALGTFGLGMAEFGIMGVLT) form a helical membrane-spanning segment. At 28 to 41 (ELAHNVGISIPAAG) the chain is on the periplasmic side. A helical transmembrane segment spans residues 42–63 (HMISYYALGVVVGAPIIALFSS). Topologically, residues 64-69 (RYSLKH) are cytoplasmic. The helical transmembrane segment at 70 to 89 (ILLFLVALCVIGNAMFTLSS) threads the bilayer. Residues 90 to 93 (SYLM) lie on the Periplasmic side of the membrane. Residues 94–116 (LAIGRLVSGFPHGAFFGVGAIVL) form a helical membrane-spanning segment. The Cytoplasmic segment spans residues 117–128 (SKIIKPGKVTAA). A helical transmembrane segment spans residues 129-151 (VAGMVSGMTVANLLGIPLGTYLS). Topologically, residues 152–155 (QEFS) are periplasmic. Residues 156–178 (WRYTFLLIAVFNIAVMASVYFWV) form a helical membrane-spanning segment. Residues 179 to 198 (PDIRDEAKGNLREQFHFLRS) are Cytoplasmic-facing. Residues 199–221 (PAPWLIFAATMFGNAGVFAWFSY) form a helical membrane-spanning segment. Over 222 to 235 (VKPYMMFISGFSET) the chain is Periplasmic. The chain crosses the membrane as a helical span at residues 236 to 255 (AMTFIMMLVGLGMVLGNMLS). Residues 256 to 261 (GRISGR) are Cytoplasmic-facing. The helical transmembrane segment at 262-284 (YSPLRIAAVTDFIIVLALLMLFF) threads the bilayer. Residues 285 to 293 (CGGMKTTSL) lie on the Periplasmic side of the membrane. Residues 294-316 (IFAFICCAGLFALSAPLQILLLQ) form a helical membrane-spanning segment. At 317-322 (NAKGGE) the chain is on the cytoplasmic side. Residues 323-342 (LLGAAGGQIAFNLGSAVGAY) form a helical membrane-spanning segment. Residues 343–351 (CGGMMLTLG) lie on the Periplasmic side of the membrane. The helical transmembrane segment at 352–374 (LAYNYVALPAALLSFAAMSSLLL) threads the bilayer. The Cytoplasmic segment spans residues 375 to 394 (YGRYKRQQAADTPVLAKPLG).

This sequence belongs to the major facilitator superfamily.

It localises to the cell inner membrane. In terms of biological role, may be involved in either the transport or processing of arabinose polymers. This Escherichia coli (strain K12) protein is Putative transporter AraJ (araJ).